Here is a 1453-residue protein sequence, read N- to C-terminus: Leucine-rich repeat-containing protein 9 (1453 aa).

7 LRR repeats span residues 53–78 (FPNL…CLQL), 97–119 (CRNL…LEKL), 120–141 (IKLK…LQTL), 142–164 (KNLK…LDSN), 166–188 (QLER…NLTR), 224–248 (LQRF…AMKK), and 264–287 (KEDL…RVKL). The tract at residues 302–321 (LKGSGKGHSDGSNNSKVTDP) is disordered. LRR repeat units lie at residues 344–367 (LNAL…IYHI), 671–693 (KARP…TSVY), 694–715 (SHIV…LSKL), 716–737 (TGLR…VYHL), 739–758 (NLEY…GFRG), 759–784 (LMKL…MLCK), 786–812 (TTSL…VIGR), 886–908 (YLKI…LEKL), 909–930 (ENLK…LESC), 931–952 (INLE…ISKM), 953–975 (TKLT…TFDN), 976–1001 (MLHL…SFTL), 1023–1048 (LCNL…LFVI), 1092–1115 (FKQM…PVDQ), 1116–1138 (FRNV…LIYL), 1139–1161 (PNVK…LKPQ), 1201–1224 (MHSL…QLNR), 1225–1247 (LRNL…LDNL), 1248–1270 (VVLQ…AFAK), 1272–1292 (SSLL…KLQS), 1293–1317 (LVKL…KLDV), 1319–1345 (STLR…IFRL), and 1365–1388 (EFHL…PMDG).

The polypeptide is Leucine-rich repeat-containing protein 9 (LRRC9) (Homo sapiens (Human)).